A 196-amino-acid chain; its full sequence is 3-isopropylmalate dehydratase small subunit (196 aa).

It belongs to the LeuD family. LeuD type 1 subfamily. Heterodimer of LeuC and LeuD.

It carries out the reaction (2R,3S)-3-isopropylmalate = (2S)-2-isopropylmalate. It functions in the pathway amino-acid biosynthesis; L-leucine biosynthesis; L-leucine from 3-methyl-2-oxobutanoate: step 2/4. In terms of biological role, catalyzes the isomerization between 2-isopropylmalate and 3-isopropylmalate, via the formation of 2-isopropylmaleate. The polypeptide is 3-isopropylmalate dehydratase small subunit (Streptococcus sanguinis (strain SK36)).